Here is a 533-residue protein sequence, read N- to C-terminus: Thromboxane-A synthase (533 aa).

Over 1 to 10 (MEVLGLLKFE) the chain is Cytoplasmic. The chain crosses the membrane as a helical span at residues 11–31 (VSGTIVTVTLLVALLALLKWY). Residues 32 to 75 (SMSAFSRLEKLGIRHPKPSPFVGNLMFFRQGFWESQLELRERYG) lie on the Lumenal side of the membrane. The chain crosses the membrane as a helical span at residues 76–96 (PLCGYYLGRRMHVVISEPDMI). The Cytoplasmic segment spans residues 97–223 (KQVLVENFSN…RRASTFCIPR (127 aa)). Residues 224 to 244 (PLLVLILSFPSIMVPLARILP) form a helical membrane-spanning segment. The Lumenal portion of the chain corresponds to 245–335 (NKNRDELNGF…FTVDEIVGQA (91 aa)). A helical membrane pass occupies residues 336 to 356 (FLFLIAGHEVITNTLSFITYL). Topologically, residues 357–533 (LATHPDCQER…NGVYIKIVSR (177 aa)) are cytoplasmic. C479 lines the heme pocket.

It belongs to the cytochrome P450 family. Monomer. Heme serves as cofactor. In terms of tissue distribution, expressed primarily in lung, kidney, and spleen.

The protein localises to the endoplasmic reticulum membrane. The enzyme catalyses prostaglandin H2 = thromboxane A2. It carries out the reaction prostaglandin H2 = (12S)-hydroxy-(5Z,8E,10E)-heptadecatrienoate + malonaldehyde. The catalysed reaction is a hydroperoxyeicosatetraenoate = an oxoeicosatetraenoate + H2O. It catalyses the reaction (15S)-hydroperoxy-(5Z,8Z,11Z,13E)-eicosatetraenoate = 15-oxo-(5Z,8Z,11Z,13E)-eicosatetraenoate + H2O. The enzyme catalyses (15S)-hydroperoxy-(5Z,8Z,11Z,13E)-eicosatetraenoate + AH2 = (15S)-hydroxy-(5Z,8Z,11Z,13E)-eicosatetraenoate + A + H2O. In terms of biological role, catalyzes the conversion of prostaglandin H2 (PGH2) to thromboxane A2 (TXA2), a potent inducer of blood vessel constriction and platelet aggregation. Also cleaves PGH2 to 12-hydroxy-heptadecatrienoicacid (12-HHT) and malondialdehyde, which is known to act as a mediator of DNA damage. 12-HHT and malondialdehyde are formed stoichiometrically in the same amounts as TXA2. Additionally, displays dehydratase activity, toward (15S)-hydroperoxy-(5Z,8Z,11Z,13E)-eicosatetraenoate (15(S)-HPETE) producing 15-KETE and 15-HETE. This Mus musculus (Mouse) protein is Thromboxane-A synthase (Tbxas1).